The sequence spans 511 residues: ESX-1 secretion system protein EccD1 (511 aa).

Position 2 is an N-acetylserine (Ser-2). The Cytoplasmic portion of the chain corresponds to 2 to 143 (SAPAVAAGPT…PEFDRTALNR (142 aa)). The chain crosses the membrane as a helical span at residues 144-164 (FVGAAIPLLTAPVIGMAMRAW). Residues 165-170 (WETGRS) lie on the Periplasmic side of the membrane. A helical transmembrane segment spans residues 171–191 (LWWPLAIGILGIAVLVGSFVA). Topologically, residues 192-202 (NRFYQSGHLAE) are cytoplasmic. The helical transmembrane segment at 203–223 (CLLVTTYLLIATAAALAVPLP) threads the bilayer. Over 224–227 (RGVN) the chain is Periplasmic. The helical transmembrane segment at 228 to 248 (SLGAPQVAGAATAVLFLTLMT) threads the bilayer. The Cytoplasmic portion of the chain corresponds to 249–257 (RGGPRKRHE). Residues 258–278 (LASFAVITAIAVIAAAAAFGY) form a helical membrane-spanning segment. At 279–285 (GYQDWVP) the chain is on the periplasmic side. A helical membrane pass occupies residues 286–306 (AGGIAFGLFIVTNAAKLTVAV). The Cytoplasmic segment spans residues 307 to 367 (ARIALPPIPV…TERSKLAKQL (61 aa)). 2 consecutive transmembrane segments (helical) span residues 368–388 (LIGY…AVVV) and 389–409 (RGHF…VCGF). The Cytoplasmic segment spans residues 410-420 (RSRLYAERWCA). Residues 421 to 441 (WALLAATVAIPTGLTAKLIIW) traverse the membrane as a helical segment. At 442 to 444 (YPH) the chain is on the periplasmic side. Residues 445–465 (YAWLLLSVYLTVALVALVVVG) traverse the membrane as a helical segment. Residues 466 to 482 (SMAHVRRVSPVVKRTLE) lie on the Cytoplasmic side of the membrane. A helical membrane pass occupies residues 483-503 (LIDGAMIAAIIPMLLWITGVY). Residues 504–511 (DTVRNIRF) lie on the Periplasmic side of the membrane.

Belongs to the EccD/Snm4 family. Possibly a homodimer. Part of the ESX-1 / type VII secretion system (T7SS), which is composed of cytosolic and membrane components. The ESX-1 membrane complex is composed of EccB1, EccCa1, EccCb1, EccD1 and EccE1.

It is found in the cell inner membrane. Part of the ESX-1 specialized secretion system, which delivers several virulence factors to host cells during infection, including the key virulence factors EsxA (ESAT-6) and EsxB (CFP-10). In Mycobacterium tuberculosis (strain ATCC 25618 / H37Rv), this protein is ESX-1 secretion system protein EccD1.